Reading from the N-terminus, the 196-residue chain is DnaA initiator-associating protein DiaA (196 aa).

The SIS domain maps to 34-196 (MVQSLLNGNK…DNTLFPHQND (163 aa)).

It belongs to the SIS family. DiaA subfamily. Homotetramer; dimer of dimers.

Functionally, required for the timely initiation of chromosomal replication via direct interactions with the DnaA initiator protein. This Pectobacterium atrosepticum (strain SCRI 1043 / ATCC BAA-672) (Erwinia carotovora subsp. atroseptica) protein is DnaA initiator-associating protein DiaA.